Here is a 353-residue protein sequence, read N- to C-terminus: Photosystem II D2 protein (353 aa).

Thr-2 carries the N-acetylthreonine modification. Thr-2 carries the phosphothreonine modification. The helical transmembrane segment at 41-61 threads the bilayer; sequence CAYFALGGWFTGTTFVTSWYT. Residue His-118 participates in chlorophyll a binding. Residues 125–141 form a helical membrane-spanning segment; that stretch reads GFMLRQFELARSVQLRP. Pheophytin a contacts are provided by Gln-130 and Asn-143. A helical transmembrane segment spans residues 153 to 166; the sequence is VFVSVFLIYPLGQS. His-198 contributes to the chlorophyll a binding site. A helical membrane pass occupies residues 208–228; it reads AALLCAIHGATVENTLFEDGD. Residues His-215 and Phe-262 each contribute to the a plastoquinone site. Fe cation is bound at residue His-215. Residue His-269 participates in Fe cation binding. A helical membrane pass occupies residues 279-295; the sequence is GLWMSALGVVGLALNLR.

This sequence belongs to the reaction center PufL/M/PsbA/D family. As to quaternary structure, PSII is composed of 1 copy each of membrane proteins PsbA, PsbB, PsbC, PsbD, PsbE, PsbF, PsbH, PsbI, PsbJ, PsbK, PsbL, PsbM, PsbT, PsbX, PsbY, PsbZ, Psb30/Ycf12, at least 3 peripheral proteins of the oxygen-evolving complex and a large number of cofactors. It forms dimeric complexes. The D1/D2 heterodimer binds P680, chlorophylls that are the primary electron donor of PSII, and subsequent electron acceptors. It shares a non-heme iron and each subunit binds pheophytin, quinone, additional chlorophylls, carotenoids and lipids. There is also a Cl(-1) ion associated with D1 and D2, which is required for oxygen evolution. The PSII complex binds additional chlorophylls, carotenoids and specific lipids. serves as cofactor.

The protein resides in the plastid. The protein localises to the chloroplast thylakoid membrane. It carries out the reaction 2 a plastoquinone + 4 hnu + 2 H2O = 2 a plastoquinol + O2. In terms of biological role, photosystem II (PSII) is a light-driven water:plastoquinone oxidoreductase that uses light energy to abstract electrons from H(2)O, generating O(2) and a proton gradient subsequently used for ATP formation. It consists of a core antenna complex that captures photons, and an electron transfer chain that converts photonic excitation into a charge separation. The D1/D2 (PsbA/PsbD) reaction center heterodimer binds P680, the primary electron donor of PSII as well as several subsequent electron acceptors. D2 is needed for assembly of a stable PSII complex. The chain is Photosystem II D2 protein from Amborella trichopoda.